Reading from the N-terminus, the 212-residue chain is Prolactin-3C1 (212 aa).

The signal sequence occupies residues 1 to 29; it reads MQLSLTQARTWKGLFLLVSCMFLWVYVTA. A disulfide bond links cysteine 80 and cysteine 188. Asparagine 100 carries an N-linked (GlcNAc...) asparagine glycan.

Belongs to the somatotropin/prolactin family. As to expression, expressed exclusively in decidua.

It localises to the secreted. The protein is Prolactin-3C1 (Prl3c1) of Mus musculus (Mouse).